The primary structure comprises 528 residues: Apolipoprotein N-acyltransferase (528 aa).

5 consecutive transmembrane segments (helical) span residues 8–28 (IMLL…AVGA), 69–89 (AFWI…WWLG), 99–119 (FAWA…VFYG), 178–198 (VLGL…PALL), and 203–223 (GAKL…GYGA). A CN hydrolase domain is found at 241–490 (VQPNIDQAAK…EGVENATFTL (250 aa)). Glu-285 (proton acceptor) is an active-site residue. Lys-349 is a catalytic residue. Cys-402 (nucleophile) is an active-site residue.

Belongs to the CN hydrolase family. Apolipoprotein N-acyltransferase subfamily.

It localises to the cell inner membrane. It carries out the reaction N-terminal S-1,2-diacyl-sn-glyceryl-L-cysteinyl-[lipoprotein] + a glycerophospholipid = N-acyl-S-1,2-diacyl-sn-glyceryl-L-cysteinyl-[lipoprotein] + a 2-acyl-sn-glycero-3-phospholipid + H(+). The protein operates within protein modification; lipoprotein biosynthesis (N-acyl transfer). Functionally, catalyzes the phospholipid dependent N-acylation of the N-terminal cysteine of apolipoprotein, the last step in lipoprotein maturation. This chain is Apolipoprotein N-acyltransferase, found in Allorhizobium ampelinum (strain ATCC BAA-846 / DSM 112012 / S4) (Agrobacterium vitis (strain S4)).